The following is a 281-amino-acid chain: Radiation response metalloprotease IrrE (281 aa).

H82 contacts Zn(2+). E83 is a catalytic residue. The Zn(2+) site is built by H86 and E113. Residues 262-281 are disordered; the sequence is LPAGRSEPDADKPEAPGDQS. The segment covering 267–281 has biased composition (basic and acidic residues); the sequence is SEPDADKPEAPGDQS.

In terms of assembly, interacts with DdrOC.

Its activity is regulated as follows. Protease activity is inhibited by EDTA. Functionally, plays a central regulatory role in DNA repair and protection pathways in response to radiation stress. Acts as a site-specific metalloprotease that cleaves and inactivates the repressor proteins DdrOC and DdrOP3, resulting in induced expression of genes required for DNA repair and cell survival after exposure to radiation. The chain is Radiation response metalloprotease IrrE from Deinococcus deserti (strain DSM 17065 / CIP 109153 / LMG 22923 / VCD115).